Reading from the N-terminus, the 122-residue chain is MDMHSGTFNPQDFAWQGLTLTPAAAIHIRELVAKQPGMVGVRLGVKQTGCAGFGYVLDSVSEPDKDDLLFEHDGAKLFVPLQAMPFIDGTEVDFVREGLNQIFKFHNPKAQNECGCGESFGV.

Cysteine 50, cysteine 114, and cysteine 116 together coordinate [2Fe-2S] cluster. Residues cysteine 50, cysteine 114, and cysteine 116 each coordinate [4Fe-4S] cluster.

This sequence belongs to the HesB/IscA family. As to quaternary structure, homodimer. Interacts with SufB and SufC.

Member of gene cluster sufABCDSE that mediates iron-sulfur cluster assembly under oxidative stress and iron limitation conditions. Binds [2Fe-2S] and [4Fe-4S] clusters by mobilizing sulfur atoms provided by the SufS-SufE cysteine desulfurase system and then transfers the assembled Fe-S clusters to target proteins including ferredoxin and aconitase. Seems to act as a Fe-S cluster carrier rather than a scaffold, this role being performed by SufB and SufC. The chain is Iron-sulfur cluster assembly protein SufA (sufA) from Escherichia coli (strain K12).